The following is a 637-amino-acid chain: MNANPTFLAATAEVDAAAVAPLPKSRKVYETGSRPDIRVPFREIEQADTPTMFGGEKNPPLTVYDTSGPYTDPQASIDIRRGLPALRRAWIEERGDTEVLDGPTSDYGKERLTDPKLTAMRFDLQRPPRRARAGANVTQMHYARRGIVTPEMEFIALRENLRREHYLETLRASGPDGEKLAKRLLRQHPGQSFGAALPSAITPEFVREEVARGRAIIPANINHPEIEPMIIGRNFLVKINANIGNSAVSSGIGEEVEKMTWAIRWGGDTVMDLSTGKHIHETREWIIRNSPVPIGTVPIYQALEKVDGKAEELTWEIFRDTLIEQAEQGVDYFTIHAGVRLPFIPMTADRMTGIVSRGGSIMAKWCLAHHKESFLYERFEEICEIMKAYDVSFSLGDGLRPGSGYDANDEAQFAELKTLGELTQVAWKHDVQVMIEGPGHVPMQMIKENMELQLKHCDEAPFYTLGPLTTDIAPGYDHITSGIGAALIGWYGTAMLCYVTPKEHLGLPNKKDVKDGIITYKIAAHAADLAKGHPGAAIRDNALSKARFEFRWDDQFNLGLDPDTAKEFHDETLPKDSMKVAHFCSMCGPHFCSMKITQDVRDYAAAQGVSEKDALQQGMQEKAVEFVKKGAEVYHRT.

Substrate contacts are provided by residues Asn-242, Met-271, Tyr-300, His-336, 356–358 (SRG), 397–400 (DGLR), and Glu-436. His-440 is a binding site for Zn(2+). A substrate-binding site is contributed by Tyr-463. A Zn(2+)-binding site is contributed by His-504. Residues Cys-584, Cys-587, and Cys-592 each coordinate [4Fe-4S] cluster.

This sequence belongs to the ThiC family. As to quaternary structure, homodimer. Requires [4Fe-4S] cluster as cofactor.

The catalysed reaction is 5-amino-1-(5-phospho-beta-D-ribosyl)imidazole + S-adenosyl-L-methionine = 4-amino-2-methyl-5-(phosphooxymethyl)pyrimidine + CO + 5'-deoxyadenosine + formate + L-methionine + 3 H(+). It functions in the pathway cofactor biosynthesis; thiamine diphosphate biosynthesis. Its function is as follows. Catalyzes the synthesis of the hydroxymethylpyrimidine phosphate (HMP-P) moiety of thiamine from aminoimidazole ribotide (AIR) in a radical S-adenosyl-L-methionine (SAM)-dependent reaction. This is Phosphomethylpyrimidine synthase from Bordetella pertussis (strain Tohama I / ATCC BAA-589 / NCTC 13251).